Reading from the N-terminus, the 214-residue chain is ATP-dependent Clp protease proteolytic subunit 2 (214 aa).

The Nucleophile role is filled by serine 110. Histidine 135 is an active-site residue.

It belongs to the peptidase S14 family. Fourteen ClpP subunits assemble into 2 heptameric rings which stack back to back to give a disk-like structure with a central cavity, resembling the structure of eukaryotic proteasomes.

The protein resides in the cytoplasm. The catalysed reaction is Hydrolysis of proteins to small peptides in the presence of ATP and magnesium. alpha-casein is the usual test substrate. In the absence of ATP, only oligopeptides shorter than five residues are hydrolyzed (such as succinyl-Leu-Tyr-|-NHMec, and Leu-Tyr-Leu-|-Tyr-Trp, in which cleavage of the -Tyr-|-Leu- and -Tyr-|-Trp bonds also occurs).. In terms of biological role, cleaves peptides in various proteins in a process that requires ATP hydrolysis. Has a chymotrypsin-like activity. Plays a major role in the degradation of misfolded proteins. This chain is ATP-dependent Clp protease proteolytic subunit 2, found in Mycobacterium leprae (strain TN).